The sequence spans 177 residues: HVA22-like protein a (177 aa).

A run of 3 helical transmembrane segments spans residues 18-38, 47-67, and 68-88; these read VLAG…QAIE, QWLT…TFAK, and LIEW…WLVI.

Belongs to the DP1 family. As to expression, predominantly expressed in flower buds and stem.

Its subcellular location is the membrane. In Arabidopsis thaliana (Mouse-ear cress), this protein is HVA22-like protein a (HVA22A).